The chain runs to 300 residues: Ribonuclease HIII (300 aa).

Residues 83 to 300 (IPIIGSDEVG…THKAQALLTK (218 aa)) enclose the RNase H type-2 domain. The a divalent metal cation site is built by aspartate 89, glutamate 90, and aspartate 194.

Belongs to the RNase HII family. RnhC subfamily. Mn(2+) is required as a cofactor. The cofactor is Mg(2+).

The protein localises to the cytoplasm. The enzyme catalyses Endonucleolytic cleavage to 5'-phosphomonoester.. Endonuclease that specifically degrades the RNA of RNA-DNA hybrids. This is Ribonuclease HIII from Streptococcus pyogenes serotype M1.